Consider the following 456-residue polypeptide: uncharacterized protein (456 aa).

One can recognise a TRAM domain in the interval 3-61 (LMRKNETREFLIEDIEFPAVGVAFYNDKKVYIKGAVPGQKVLARVSKVRREKIEAKLKE). [4Fe-4S] cluster-binding residues include C74, C80, C83, and C163. S-adenosyl-L-methionine contacts are provided by Q289, Y318, E339, and D384. C411 serves as the catalytic Nucleophile.

Belongs to the class I-like SAM-binding methyltransferase superfamily. RNA M5U methyltransferase family.

This is an uncharacterized protein from Clostridium acetobutylicum (strain ATCC 824 / DSM 792 / JCM 1419 / IAM 19013 / LMG 5710 / NBRC 13948 / NRRL B-527 / VKM B-1787 / 2291 / W).